Consider the following 342-residue polypeptide: Nicotinate-nucleotide--dimethylbenzimidazole phosphoribosyltransferase (342 aa).

The active-site Proton acceptor is Glu-311.

Belongs to the CobT family.

The enzyme catalyses 5,6-dimethylbenzimidazole + nicotinate beta-D-ribonucleotide = alpha-ribazole 5'-phosphate + nicotinate + H(+). Its pathway is nucleoside biosynthesis; alpha-ribazole biosynthesis; alpha-ribazole from 5,6-dimethylbenzimidazole: step 1/2. Its function is as follows. Catalyzes the synthesis of alpha-ribazole-5'-phosphate from nicotinate mononucleotide (NAMN) and 5,6-dimethylbenzimidazole (DMB). The protein is Nicotinate-nucleotide--dimethylbenzimidazole phosphoribosyltransferase of Vibrio vulnificus (strain CMCP6).